The following is a 255-amino-acid chain: tRNA (guanine-N(1)-)-methyltransferase (255 aa).

S-adenosyl-L-methionine contacts are provided by residues G113 and 133–138 (IGDYVL).

The protein belongs to the RNA methyltransferase TrmD family. Homodimer.

The protein localises to the cytoplasm. It catalyses the reaction guanosine(37) in tRNA + S-adenosyl-L-methionine = N(1)-methylguanosine(37) in tRNA + S-adenosyl-L-homocysteine + H(+). Its function is as follows. Specifically methylates guanosine-37 in various tRNAs. The protein is tRNA (guanine-N(1)-)-methyltransferase of Mannheimia succiniciproducens (strain KCTC 0769BP / MBEL55E).